We begin with the raw amino-acid sequence, 618 residues long: Chaperone protein HscA homolog (618 aa).

It belongs to the heat shock protein 70 family.

Its function is as follows. Chaperone involved in the maturation of iron-sulfur cluster-containing proteins. Has a low intrinsic ATPase activity which is markedly stimulated by HscB. This chain is Chaperone protein HscA homolog, found in Variovorax paradoxus (strain S110).